We begin with the raw amino-acid sequence, 466 residues long: Xanthine permease XanQ (466 aa).

Residues 1-44 (MSDINHAGSDLIFELEDRPPFHQALVGAITHLLAIFVPMVTPAL) are Cytoplasmic-facing. A helical transmembrane segment spans residues 45 to 65 (IVGAALQLSAETTAYLVSMAM). Over 66 to 74 (IASGIGTWL) the chain is Periplasmic. Residues 75–95 (QVNRYGIVGSGLLSIQSVNFS) traverse the membrane as a helical segment. Over 96-99 (FVTV) the chain is Cytoplasmic. A helical transmembrane segment spans residues 100-120 (MIALGSSMKSDGFHEELIMSS). Over 121–139 (LLGVSFVGAFLVVGSSFIL) the chain is Periplasmic. Residues 140 to 160 (PYLRRVITPTVSGIVVLMIGL) traverse the membrane as a helical segment. Residues 161 to 170 (SLIKVGIIDF) lie on the Cytoplasmic side of the membrane. Residues 171 to 191 (GGGFAAKSSGTFGNYEHLGVG) traverse the membrane as a helical segment. At 192–199 (LLVLIVVI) the chain is on the periplasmic side. Residues 200–220 (GFNCCRSPLLRMGGIAIGLCV) form a helical membrane-spanning segment. Over 221 to 229 (GYIASLCLG) the chain is Cytoplasmic. The chain crosses the membrane as a helical span at residues 230-250 (MVDFSSMRNLPLITIPHPFKY). Over 251 to 277 (GFSFSFHQFLVVGTIYLLSVLEAVGDI) the chain is Periplasmic. The helical transmembrane segment at 278–298 (TATAMVSRRPIQGEEYQSRLK) threads the bilayer. Topologically, residues 299 to 317 (GGVLADGLVSVIASAVGSL) are cytoplasmic. A helical transmembrane segment spans residues 318–338 (PLTTFAQNNGVIQMTGVASRY). Topologically, residues 339–361 (VGRTIAVMLVILGLFPMIGGFFT) are periplasmic. Residues 362–382 (TIPSAVLGGAMTLMFSMIAIA) traverse the membrane as a helical segment. Gly383 is a topological domain (cytoplasmic). Residues 384-403 (IRIIITNGLKRRETLIVATS) form a helical membrane-spanning segment. Residues 404 to 444 (LGLGLGVSYDPEIFKILPASIYVLVENPICAGGLTAILLNI) lie on the Periplasmic side of the membrane. A helical membrane pass occupies residues 445-465 (ILPGGYRQENVLPGITSAEEM). Asp466 is a topological domain (cytoplasmic).

This sequence belongs to the nucleobase:cation symporter-2 (NCS2) (TC 2.A.40) family.

The protein resides in the cell inner membrane. It carries out the reaction xanthine(in) + H(+)(in) = xanthine(out) + H(+)(out). In terms of biological role, specific, proton motive force-dependent high-affinity transporter for xanthine. The polypeptide is Xanthine permease XanQ (xanQ) (Escherichia coli O157:H7).